The sequence spans 199 residues: 3-isopropylmalate dehydratase small subunit (199 aa).

Belongs to the LeuD family. LeuD type 1 subfamily. In terms of assembly, heterodimer of LeuC and LeuD.

The enzyme catalyses (2R,3S)-3-isopropylmalate = (2S)-2-isopropylmalate. Its pathway is amino-acid biosynthesis; L-leucine biosynthesis; L-leucine from 3-methyl-2-oxobutanoate: step 2/4. In terms of biological role, catalyzes the isomerization between 2-isopropylmalate and 3-isopropylmalate, via the formation of 2-isopropylmaleate. The sequence is that of 3-isopropylmalate dehydratase small subunit from Pseudoalteromonas translucida (strain TAC 125).